We begin with the raw amino-acid sequence, 897 residues long: Isoleucine--tRNA ligase (897 aa).

The short motif at 59-69 (PYANGDIHVGH) is the 'HIGH' region element. Glu553 contributes to the L-isoleucyl-5'-AMP binding site. The 'KMSKS' region motif lies at 594 to 598 (KMSKS). Residue Lys597 participates in ATP binding. Positions 866, 869, 883, and 886 each coordinate Zn(2+).

Belongs to the class-I aminoacyl-tRNA synthetase family. IleS type 1 subfamily. As to quaternary structure, monomer. Zn(2+) serves as cofactor.

It is found in the cytoplasm. The catalysed reaction is tRNA(Ile) + L-isoleucine + ATP = L-isoleucyl-tRNA(Ile) + AMP + diphosphate. Its function is as follows. Catalyzes the attachment of isoleucine to tRNA(Ile). As IleRS can inadvertently accommodate and process structurally similar amino acids such as valine, to avoid such errors it has two additional distinct tRNA(Ile)-dependent editing activities. One activity is designated as 'pretransfer' editing and involves the hydrolysis of activated Val-AMP. The other activity is designated 'posttransfer' editing and involves deacylation of mischarged Val-tRNA(Ile). This Mycoplasmopsis synoviae (strain 53) (Mycoplasma synoviae) protein is Isoleucine--tRNA ligase.